A 62-amino-acid chain; its full sequence is Large ribosomal subunit protein bL35 (62 aa).

Residues 25 to 62 are disordered; it reads EQAYRSHLSQNKTTKQKRQARKSVQMHSSDVKRFKALI. Residues 53-62 show a composition bias toward basic and acidic residues; sequence SDVKRFKALI.

This sequence belongs to the bacterial ribosomal protein bL35 family.

This Mycoplasmopsis fermentans (Mycoplasma fermentans) protein is Large ribosomal subunit protein bL35.